Reading from the N-terminus, the 707-residue chain is Matrix metalloproteinase-9 (707 aa).

The first 19 residues, 1-19 (MSLWQPLVLVLLVLGCCFA), serve as a signal peptide directing secretion. Positions 20–93 (APRQRQSTLV…GELDSATLKA (74 aa)) are cleaved as a propeptide — activation peptide. Residue Asn-38 is glycosylated (N-linked (GlcNAc...) asparagine). The Cysteine switch motif lies at 97–104 (PRCGVPDL). Residue Cys-99 coordinates Zn(2+). Asn-120 and Asn-127 each carry an N-linked (GlcNAc...) asparagine glycan. Ca(2+) contacts are provided by Asp-131 and Asp-165. Positions 175 and 177 each coordinate Zn(2+). 4 residues coordinate Ca(2+): Asp-182, Gly-183, Asp-185, and Leu-187. His-190 contributes to the Zn(2+) binding site. Residues Gly-197, Gln-199, and Asp-201 each contribute to the Ca(2+) site. His-203 serves as a coordination point for Zn(2+). Positions 205, 206, and 208 each coordinate Ca(2+). Fibronectin type-II domains lie at 225–273 (ADGA…FCPS), 283–331 (ADGK…FCPT), and 342–390 (SAGE…FCPD). 6 disulfide bridges follow: Cys-230–Cys-256, Cys-244–Cys-271, Cys-288–Cys-314, Cys-302–Cys-329, Cys-347–Cys-373, and Cys-361–Cys-388. His-401 lines the Zn(2+) pocket. Residue Glu-402 is part of the active site. Residues His-405 and His-411 each contribute to the Zn(2+) site. The disordered stretch occupies residues 431 to 508 (LHKDDVNGIR…AGPSTATTVP (78 aa)). 2 stretches are compositionally biased toward pro residues: residues 452-475 (RPPT…PPTV) and 486-499 (TGPP…PPTA). An intrachain disulfide couples Cys-516 to Cys-704. 4 Hemopexin repeats span residues 518–563 (VNIF…WPAL), 564–608 (PRKL…GLGA), 610–657 (VAQV…FPGV), and 658–704 (PLDT…ILQC).

Belongs to the peptidase M10A family. In terms of assembly, exists as monomer or homodimer; disulfide-linked. Also exists as heterodimer with LCN2. Macrophages and transformed cell lines produce only the monomeric form. Interacts with ECM1. (Microbial infection) Interacts with Staphylococcus aureus protein SSL5; this interaction inhibits MMP9 activity. Zn(2+) is required as a cofactor. It depends on Ca(2+) as a cofactor. In terms of processing, processing of the precursor yields different active forms of 64, 67 and 82 kDa. Sequentially processing by MMP3 yields the 82 kDa matrix metalloproteinase-9. Post-translationally, N- and O-glycosylated. As to expression, detected in neutrophils (at protein level). Produced by normal alveolar macrophages and granulocytes.

The protein localises to the secreted. Its subcellular location is the extracellular space. It is found in the extracellular matrix. It carries out the reaction Cleavage of gelatin types I and V and collagen types IV and V.. Its activity is regulated as follows. Inhibited by histatin-3 1/24 (histatin-5). Inhibited by ECM1. Matrix metalloproteinase that plays an essential role in local proteolysis of the extracellular matrix and in leukocyte migration. Could play a role in bone osteoclastic resorption. Cleaves KiSS1 at a Gly-|-Leu bond. Cleaves NINJ1 to generate the Secreted ninjurin-1 form. Cleaves type IV and type V collagen into large C-terminal three quarter fragments and shorter N-terminal one quarter fragments. Degrades fibronectin but not laminin or Pz-peptide. The polypeptide is Matrix metalloproteinase-9 (MMP9) (Homo sapiens (Human)).